Consider the following 84-residue polypeptide: GTP cyclohydrolase 1 feedback regulatory protein (84 aa).

This sequence belongs to the GFRP family. Homopentamer. Forms a complex with GCH1 where a GCH1 homodecamer is sandwiched by two GFRP homopentamers.

Its subcellular location is the nucleus. It localises to the nucleus membrane. The protein resides in the cytoplasm. The protein localises to the cytosol. Its function is as follows. Mediates tetrahydrobiopterin inhibition of GTP cyclohydrolase 1. This is GTP cyclohydrolase 1 feedback regulatory protein (gchfr) from Xenopus tropicalis (Western clawed frog).